Here is a 157-residue protein sequence, read N- to C-terminus: Ribosomal RNA large subunit methyltransferase H (157 aa).

Residues leucine 73, glycine 105, and 124-129 (LSKMTF) each bind S-adenosyl-L-methionine.

Belongs to the RNA methyltransferase RlmH family. As to quaternary structure, homodimer.

It localises to the cytoplasm. The enzyme catalyses pseudouridine(1915) in 23S rRNA + S-adenosyl-L-methionine = N(3)-methylpseudouridine(1915) in 23S rRNA + S-adenosyl-L-homocysteine + H(+). In terms of biological role, specifically methylates the pseudouridine at position 1915 (m3Psi1915) in 23S rRNA. This Phocaeicola vulgatus (strain ATCC 8482 / DSM 1447 / JCM 5826 / CCUG 4940 / NBRC 14291 / NCTC 11154) (Bacteroides vulgatus) protein is Ribosomal RNA large subunit methyltransferase H.